The primary structure comprises 268 residues: Imidazole glycerol phosphate synthase subunit HisF (268 aa).

Residues Asp-12 and Asp-131 contribute to the active site.

Belongs to the HisA/HisF family. In terms of assembly, heterodimer of HisH and HisF.

The protein localises to the cytoplasm. The enzyme catalyses 5-[(5-phospho-1-deoxy-D-ribulos-1-ylimino)methylamino]-1-(5-phospho-beta-D-ribosyl)imidazole-4-carboxamide + L-glutamine = D-erythro-1-(imidazol-4-yl)glycerol 3-phosphate + 5-amino-1-(5-phospho-beta-D-ribosyl)imidazole-4-carboxamide + L-glutamate + H(+). The protein operates within amino-acid biosynthesis; L-histidine biosynthesis; L-histidine from 5-phospho-alpha-D-ribose 1-diphosphate: step 5/9. Functionally, IGPS catalyzes the conversion of PRFAR and glutamine to IGP, AICAR and glutamate. The HisF subunit catalyzes the cyclization activity that produces IGP and AICAR from PRFAR using the ammonia provided by the HisH subunit. This Methanoregula boonei (strain DSM 21154 / JCM 14090 / 6A8) protein is Imidazole glycerol phosphate synthase subunit HisF.